We begin with the raw amino-acid sequence, 536 residues long: Uridine 5'-monophosphate transferase (536 aa).

The disordered stretch occupies residues 22–84 (ADHPTHTPED…GLQQCSSSPS (63 aa)). Positions 31 to 45 (DSPQTVPSPRSSSAH) are enriched in polar residues. Residues 48–60 (EIQELRSLQETRP) show a composition bias toward basic and acidic residues. Polar residues predominate over residues 66–84 (RSQSRSSKHGLQQCSSSPS). LRR repeat units follow at residues 140–164 (AGQA…LHRL), 165–189 (AHLR…SLCK), 191–211 (LERI…IGAL), 212–234 (KNLS…IGQC), 236–257 (SLTT…LANL), and 258–282 (TQLK…NLDD). Residues 377–533 (ITLDRIFKLN…LEGIATVMNQ (157 aa)) form the Fido domain.

This sequence in the C-terminal section; belongs to the fic family. Interacts with several members of the Arabidopsis RLCK VIIa subfamily.

The protein resides in the secreted. It is found in the host cell. The protein localises to the host cell membrane. The catalysed reaction is L-seryl-[protein] + UTP = O-(5'-uridylyl)-L-seryl-[protein] + diphosphate. The enzyme catalyses L-threonyl-[protein] + UTP = uridylyl-L-threonyl-[protein] + diphosphate. Functionally, functions both as a virulence and an avirulence gene in Arabidopsis. Causes disease on the Kashmir (Kas) ecotype, but not on Columbia (Col-0) ecotype. Acts by directly uridylylating the conserved phosphorylation sites in the activation loop of a number of host receptor-like cytoplasmic protein kinases (RLCK), including BIK1, RIPK, PBL1 and PBL2, preventing the activation of these kinases and subsequent signal transduction. In susceptible Arabidopsis plants, uridylylation of BIK1 inhibits the PAMP-triggered immunity (PTI) signaling cascade and thereby promotes bacterial virulence. It also inhibits RPM1-dependent effector-triggered immunity (ETI) in mesophyll tissues by targeting RIPK. In contrast, in the resistant ecotype Col-0, xopAC is a major avirulence gene. Uridylylation of PBL2 triggers the PBL2-RKS1 interaction and thus the assembly of the PBL2-RKS1-ZAR1 complex, which, in turn, activates effector-triggered immunity (ETI) against X.campestris. This Xanthomonas campestris pv. campestris (strain 8004) protein is Uridine 5'-monophosphate transferase.